Reading from the N-terminus, the 404-residue chain is MLSEQTRSLVKATVPVLQQHGVALTSHFYRRMFEHNPELKNVFNQGHQHSGQQQQALAMAVLAYARHIDDPSPLLPVLTRVAHKHVSLGIRAEHYPIVGKHLLASIRELLGEAAGDDLIQAWAEAYGLLADTLIGIENGMYGDATSADGGWSGWRPFRVAKKEIESEEIASFYLEPSDGGALPAFKPGQYVSVKRFVAEWGLSQPRQYSLSDAPNGEYLRISVKREDAAQGKPAGRVSNLLHREVQVGDVLELSAPQGDFFLHEERDGPAVLISAGVGQTPMQAMLGQLLKRGGREVRFLHAARHGGAHAMGAKVRQLADRHPQLKVHVCYETPRAQDAIGVDYQAAGRLNLADVKGIALLPDADYYLCGPLGFMRAQRDSLRGLGVAADRIHYEVFGSHPGDD.

Residues 1 to 138 (MLSEQTRSLV…LADTLIGIEN (138 aa)) enclose the Globin domain. Histidine 85 lines the heme b pocket. Residues tyrosine 95 and glutamate 137 each act as charge relay system in the active site. The reductase stretch occupies residues 149-404 (GGWSGWRPFR…EVFGSHPGDD (256 aa)). Residues 152-263 (SGWRPFRVAK…SAPQGDFFLH (112 aa)) form the FAD-binding FR-type domain. FAD-binding positions include tyrosine 190 and 206–209 (RQYS). Residue 276–281 (GVGQTP) participates in NADP(+) binding. FAD is bound at residue 396–399 (VFGS).

The protein belongs to the globin family. Two-domain flavohemoproteins subfamily. It in the C-terminal section; belongs to the flavoprotein pyridine nucleotide cytochrome reductase family. Heme b is required as a cofactor. It depends on FAD as a cofactor.

The enzyme catalyses 2 nitric oxide + NADPH + 2 O2 = 2 nitrate + NADP(+) + H(+). It carries out the reaction 2 nitric oxide + NADH + 2 O2 = 2 nitrate + NAD(+) + H(+). Functionally, is involved in NO detoxification in an aerobic process, termed nitric oxide dioxygenase (NOD) reaction that utilizes O(2) and NAD(P)H to convert NO to nitrate, which protects the bacterium from various noxious nitrogen compounds. Therefore, plays a central role in the inducible response to nitrosative stress. The sequence is that of Flavohemoprotein from Chromobacterium violaceum (strain ATCC 12472 / DSM 30191 / JCM 1249 / CCUG 213 / NBRC 12614 / NCIMB 9131 / NCTC 9757 / MK).